A 1430-amino-acid chain; its full sequence is Gag-Pol polyprotein (1430 aa).

The N-myristoyl glycine; by host moiety is linked to residue G2. Positions 7–31 (ILSGGKLDEWEKIQLRPGGKKRYKM) are interaction with Gp41. An interaction with host CALM1 region spans residues 8–43 (LSGGKLDEWEKIQLRPGGKKRYKMKHLIWASRELER). The interval 12 to 19 (KLDEWEKI) is interaction with host AP3D1. Residues 14 to 33 (DEWEKIQLRPGGKKRYKMKH) are interaction with membrane phosphatidylinositol 4,5-bisphosphate and RNA. Residues 16 to 22 (WEKIQLR) carry the Nuclear export signal motif. The Nuclear localization signal motif lies at 26–32 (KKRYKMK). The segment at 73–77 (EELKS) is interaction with membrane phosphatidylinositol 4,5-bisphosphate. At Y128 the chain carries Phosphotyrosine; by host. Residues 185 to 223 (NTVGGHQAAMQMLKDTINEEAAEWDRLHPVHAGPAPPGQ) form an interaction with human PPIA/CYPA and NUP153 region. Residues 273-359 (YSPVSILDIK…GGPSHKARVL (87 aa)) form a dimerization/Multimerization of capsid protein p24 region. 2 consecutive CCHC-type zinc fingers follow at residues 384–401 (VKCF…NCRA) and 405–422 (KGCW…DCTE). The tract at residues 438–475 (EARKFPSEQTRANSPTSRELRVQRGDNPLSEAGAERRG) is disordered. Residues 444 to 454 (SEQTRANSPTS) show a composition bias toward polar residues. Residues 483–487 (PQITL) are dimerization of protease. Residues 502–571 (KEALLDTGAD…TPVNIIGRNM (70 aa)) form the Peptidase A2 domain. The For protease activity; shared with dimeric partner role is filled by D507. Dimerization of protease regions lie at residues 531–537 (GIGGFIK) and 570–582 (NMLT…LNFP). The 191-residue stretch at 625–815 (EGKISKIGPE…PPFLWMGHEL (191 aa)) folds into the Reverse transcriptase domain. Positions 691, 766, and 767 each coordinate Mg(2+). Positions 808 to 816 (FLWMGHELH) are RT 'primer grip'. The short motif at 980-996 (WDTWWTDYWQATWIPEW) is the Tryptophan repeat motif element. One can recognise an RNase H type-1 domain in the interval 1016–1139 (IAGADTFYVD…VDKLVSAGVR (124 aa)). Mg(2+) is bound by residues D1025, E1060, D1080, and D1131. The Integrase-type zinc-finger motif lies at 1145–1186 (DGIDKAQEEHEKYHNNWRAMASDFNLPPIVAKEIVASCDKCQ). Residues H1154, H1158, C1182, and C1185 each contribute to the Zn(2+) site. In terms of domain architecture, Integrase catalytic spans 1196 to 1346 (VDCSPGIWQL…SAGERIIDII (151 aa)). 3 residues coordinate Mg(2+): D1206, D1258, and E1294. Residues 1365–1412 (FRVYYRDSRNPVWKGPAKLLWKGEGAVVIQDNSEIKIVPRRKAKIIRD) constitute a DNA-binding region (integrase-type).

As to quaternary structure, homotrimer; further assembles as hexamers of trimers. Interacts with gp41 (via C-terminus). Interacts with host CALM1; this interaction induces a conformational change in the Matrix protein, triggering exposure of the myristate group. Interacts with host AP3D1; this interaction allows the polyprotein trafficking to multivesicular bodies during virus assembly. Part of the pre-integration complex (PIC) which is composed of viral genome, matrix protein, Vpr and integrase. Homodimer; the homodimer further multimerizes as homohexamers or homopentamers. Interacts with human PPIA/CYPA; This interaction stabilizes the capsid. Interacts with human NUP153. Interacts with host PDZD8; this interaction stabilizes the capsid. Interacts with monkey TRIM5; this interaction destabilizes the capsid. In terms of assembly, homodimer, whose active site consists of two apposed aspartic acid residues. As to quaternary structure, heterodimer of p66 RT and p51 RT (RT p66/p51). Heterodimerization of RT is essential for DNA polymerase activity. The overall folding of the subdomains is similar in p66 RT and p51 RT but the spatial arrangements of the subdomains are dramatically different. Homotetramer; may further associate as a homohexadecamer. Part of the pre-integration complex (PIC) which is composed of viral genome, matrix protein, Vpr and integrase. Interacts with human SMARCB1/INI1 and human PSIP1/LEDGF isoform 1. Interacts with human KPNA3; this interaction might play a role in nuclear import of the pre-integration complex. Interacts with human NUP153; this interaction might play a role in nuclear import of the pre-integration complex. It depends on Mg(2+) as a cofactor. Specific enzymatic cleavages by the viral protease yield mature proteins. The protease is released by autocatalytic cleavage. The polyprotein is cleaved during and after budding, this process is termed maturation. Proteolytic cleavage of p66 RT removes the RNase H domain to yield the p51 RT subunit. Nucleocapsid protein p7 might be further cleaved after virus entry. Post-translationally, tyrosine phosphorylated presumably in the virion by a host kinase. Phosphorylation is apparently not a major regulator of membrane association. In terms of processing, phosphorylated possibly by host MAPK1; this phosphorylation is necessary for Pin1-mediated virion uncoating. Methylated by host PRMT6, impairing its function by reducing RNA annealing and the initiation of reverse transcription.

The protein localises to the host cell membrane. It localises to the host endosome. The protein resides in the host multivesicular body. Its subcellular location is the virion membrane. It is found in the host nucleus. The protein localises to the host cytoplasm. It localises to the virion. The catalysed reaction is Specific for a P1 residue that is hydrophobic, and P1' variable, but often Pro.. It carries out the reaction Endohydrolysis of RNA in RNA/DNA hybrids. Three different cleavage modes: 1. sequence-specific internal cleavage of RNA. Human immunodeficiency virus type 1 and Moloney murine leukemia virus enzymes prefer to cleave the RNA strand one nucleotide away from the RNA-DNA junction. 2. RNA 5'-end directed cleavage 13-19 nucleotides from the RNA end. 3. DNA 3'-end directed cleavage 15-20 nucleotides away from the primer terminus.. The enzyme catalyses 3'-end directed exonucleolytic cleavage of viral RNA-DNA hybrid.. It catalyses the reaction DNA(n) + a 2'-deoxyribonucleoside 5'-triphosphate = DNA(n+1) + diphosphate. Protease: The viral protease is inhibited by many synthetic protease inhibitors (PIs), such as amprenavir, atazanavir, indinavir, loprinavir, nelfinavir, ritonavir and saquinavir. Use of protease inhibitors in tritherapy regimens permit more ambitious therapeutic strategies. Reverse transcriptase/ribonuclease H: RT can be inhibited either by nucleoside RT inhibitors (NRTIs) or by non nucleoside RT inhibitors (NNRTIs). NRTIs act as chain terminators, whereas NNRTIs inhibit DNA polymerization by binding a small hydrophobic pocket near the RT active site and inducing an allosteric change in this region. Classical NRTIs are abacavir, adefovir (PMEA), didanosine (ddI), lamivudine (3TC), stavudine (d4T), tenofovir (PMPA), zalcitabine (ddC), and zidovudine (AZT). Classical NNRTIs are atevirdine (BHAP U-87201E), delavirdine, efavirenz (DMP-266), emivirine (I-EBU), and nevirapine (BI-RG-587). The tritherapies used as a basic effective treatment of AIDS associate two NRTIs and one NNRTI. Its function is as follows. Mediates, with Gag polyprotein, the essential events in virion assembly, including binding the plasma membrane, making the protein-protein interactions necessary to create spherical particles, recruiting the viral Env proteins, and packaging the genomic RNA via direct interactions with the RNA packaging sequence (Psi). Gag-Pol polyprotein may regulate its own translation, by the binding genomic RNA in the 5'-UTR. At low concentration, the polyprotein would promote translation, whereas at high concentration, the polyprotein would encapsidate genomic RNA and then shut off translation. Functionally, targets the polyprotein to the plasma membrane via a multipartite membrane-binding signal, that includes its myristoylated N-terminus. Matrix protein is part of the pre-integration complex. Implicated in the release from host cell mediated by Vpu. Binds to RNA. In terms of biological role, forms the conical core that encapsulates the genomic RNA-nucleocapsid complex in the virion. Most core are conical, with only 7% tubular. The core is constituted by capsid protein hexamer subunits. The core is disassembled soon after virion entry. Host restriction factors such as TRIM5-alpha or TRIMCyp bind retroviral capsids and cause premature capsid disassembly, leading to blocks in reverse transcription. Capsid restriction by TRIM5 is one of the factors which restricts HIV-1 to the human species. Host PIN1 apparently facilitates the virion uncoating. On the other hand, interactions with PDZD8 or CYPA stabilize the capsid. Encapsulates and protects viral dimeric unspliced genomic RNA (gRNA). Binds these RNAs through its zinc fingers. Acts as a nucleic acid chaperone which is involved in rearangement of nucleic acid secondary structure during gRNA retrotranscription. Also facilitates template switch leading to recombination. As part of the polyprotein, participates in gRNA dimerization, packaging, tRNA incorporation and virion assembly. Its function is as follows. Aspartyl protease that mediates proteolytic cleavages of Gag and Gag-Pol polyproteins during or shortly after the release of the virion from the plasma membrane. Cleavages take place as an ordered, step-wise cascade to yield mature proteins. This process is called maturation. Displays maximal activity during the budding process just prior to particle release from the cell. Also cleaves Nef and Vif, probably concomitantly with viral structural proteins on maturation of virus particles. Hydrolyzes host EIF4GI and PABP1 in order to shut off the capped cellular mRNA translation. The resulting inhibition of cellular protein synthesis serves to ensure maximal viral gene expression and to evade host immune response. Also mediates cleavage of host YTHDF3. Mediates cleavage of host CARD8, thereby activating the CARD8 inflammasome, leading to the clearance of latent HIV-1 in patient CD4(+) T-cells after viral reactivation; in contrast, HIV-1 can evade CARD8-sensing when its protease remains inactive in infected cells prior to viral budding. Functionally, multifunctional enzyme that converts the viral RNA genome into dsDNA in the cytoplasm, shortly after virus entry into the cell. This enzyme displays a DNA polymerase activity that can copy either DNA or RNA templates, and a ribonuclease H (RNase H) activity that cleaves the RNA strand of RNA-DNA heteroduplexes in a partially processive 3' to 5' endonucleasic mode. Conversion of viral genomic RNA into dsDNA requires many steps. A tRNA(3)-Lys binds to the primer-binding site (PBS) situated at the 5'-end of the viral RNA. RT uses the 3' end of the tRNA primer to perform a short round of RNA-dependent minus-strand DNA synthesis. The reading proceeds through the U5 region and ends after the repeated (R) region which is present at both ends of viral RNA. The portion of the RNA-DNA heteroduplex is digested by the RNase H, resulting in a ssDNA product attached to the tRNA primer. This ssDNA/tRNA hybridizes with the identical R region situated at the 3' end of viral RNA. This template exchange, known as minus-strand DNA strong stop transfer, can be either intra- or intermolecular. RT uses the 3' end of this newly synthesized short ssDNA to perform the RNA-dependent minus-strand DNA synthesis of the whole template. RNase H digests the RNA template except for two polypurine tracts (PPTs) situated at the 5'-end and near the center of the genome. It is not clear if both polymerase and RNase H activities are simultaneous. RNase H probably can proceed both in a polymerase-dependent (RNA cut into small fragments by the same RT performing DNA synthesis) and a polymerase-independent mode (cleavage of remaining RNA fragments by free RTs). Secondly, RT performs DNA-directed plus-strand DNA synthesis using the PPTs that have not been removed by RNase H as primers. PPTs and tRNA primers are then removed by RNase H. The 3' and 5' ssDNA PBS regions hybridize to form a circular dsDNA intermediate. Strand displacement synthesis by RT to the PBS and PPT ends produces a blunt ended, linear dsDNA copy of the viral genome that includes long terminal repeats (LTRs) at both ends. In terms of biological role, catalyzes viral DNA integration into the host chromosome, by performing a series of DNA cutting and joining reactions. This enzyme activity takes place after virion entry into a cell and reverse transcription of the RNA genome in dsDNA. The first step in the integration process is 3' processing. This step requires a complex comprising the viral genome, matrix protein, Vpr and integrase. This complex is called the pre-integration complex (PIC). The integrase protein removes 2 nucleotides from each 3' end of the viral DNA, leaving recessed CA OH's at the 3' ends. In the second step, the PIC enters cell nucleus. This process is mediated through integrase and Vpr proteins, and allows the virus to infect a non dividing cell. This ability to enter the nucleus is specific of lentiviruses, other retroviruses cannot and rely on cell division to access cell chromosomes. In the third step, termed strand transfer, the integrase protein joins the previously processed 3' ends to the 5' ends of strands of target cellular DNA at the site of integration. The 5'-ends are produced by integrase-catalyzed staggered cuts, 5 bp apart. A Y-shaped, gapped, recombination intermediate results, with the 5'-ends of the viral DNA strands and the 3' ends of target DNA strands remaining unjoined, flanking a gap of 5 bp. The last step is viral DNA integration into host chromosome. This involves host DNA repair synthesis in which the 5 bp gaps between the unjoined strands are filled in and then ligated. Since this process occurs at both cuts flanking the HIV genome, a 5 bp duplication of host DNA is produced at the ends of HIV-1 integration. Alternatively, Integrase may catalyze the excision of viral DNA just after strand transfer, this is termed disintegration. This is Gag-Pol polyprotein (gag-pol) from Homo sapiens (Human).